A 341-amino-acid chain; its full sequence is THO complex subunit 6 homolog (341 aa).

7 WD repeats span residues 22 to 61, 74 to 112, 124 to 165, 166 to 205, 215 to 254, 256 to 293, and 295 to 339; these read RLHM…SSEA, AHDG…GCKE, LEVP…RALR, GHTD…EVQT, SRPH…PTTV, PIRA…KAQV, and GSSP…AFSL. At Ser180 the chain carries Phosphoserine.

Belongs to the WD repeat THOC6 family. Component of the THO subcomplex, which is composed of THOC1, THOC2, THOC3, THOC5, THOC6 and THOC7. The THO subcomplex interacts with DDX39B to form the THO-DDX39B complex which multimerizes into a 28-subunit tetrameric assembly. Component of the transcription/export (TREX) complex at least composed of ALYREF/THOC4, DDX39B, SARNP/CIP29, CHTOP and the THO subcomplex; in the complex interacts with THOC5; together with THOC5 and THOC7, plays a key structural role in the oligomerization of the THO-DDX39B complex. TREX seems to have a dynamic structure involving ATP-dependent remodeling.

The protein resides in the nucleus. It is found in the nucleus speckle. In terms of biological role, component of the THO subcomplex of the TREX complex which is thought to couple mRNA transcription, processing and nuclear export, and which specifically associates with spliced mRNA and not with unspliced pre-mRNA. Plays a key structural role in the oligomerization of the THO-DDX39B complex. TREX is recruited to spliced mRNAs by a transcription-independent mechanism, binds to mRNA upstream of the exon-junction complex (EJC) and is recruited in a splicing- and cap-dependent manner to a region near the 5' end of the mRNA where it functions in mRNA export to the cytoplasm via the TAP/NXF1 pathway. Plays a role in apoptosis negative control involved in brain development. The polypeptide is THO complex subunit 6 homolog (Thoc6) (Mus musculus (Mouse)).